The sequence spans 102 residues: ATP-dependent Clp protease adapter protein ClpS (102 aa).

Belongs to the ClpS family. As to quaternary structure, binds to the N-terminal domain of the chaperone ClpA.

Its function is as follows. Involved in the modulation of the specificity of the ClpAP-mediated ATP-dependent protein degradation. The polypeptide is ATP-dependent Clp protease adapter protein ClpS (Shewanella frigidimarina (strain NCIMB 400)).